We begin with the raw amino-acid sequence, 350 residues long: Inhibitor of nuclear factor kappa-B kinase-interacting protein (350 aa).

A compositionally biased stretch (basic residues) spans 1–11 (MSEVKSRKKSG). A disordered region spans residues 1–39 (MSEVKSRKKSGPKGAPAAEPGKRSEGGKTPVARSSGGGG). Residues 46-62 (CLSLLSLGTCLGLAWFV) form a helical membrane-spanning segment. N-linked (GlcNAc...) asparagine glycosylation is present at N144. Residues 184-217 (GLVTDVISLTDSVQELENKIEKVEKNTVKNIGDL) adopt a coiled-coil conformation. An N-linked (GlcNAc...) asparagine glycan is attached at N328.

Post-translationally, N-glycosylated. Isoform 4 is glycosylated at Asn-154. Expressed in vein endothelial cells. Isoform 4 is expressed in lung, kidney, spleen, thymus and skeletal muscle.

Its subcellular location is the endoplasmic reticulum membrane. Target of p53/TP53 with pro-apoptotic function. The sequence is that of Inhibitor of nuclear factor kappa-B kinase-interacting protein (IKBIP) from Homo sapiens (Human).